A 709-amino-acid polypeptide reads, in one-letter code: Polyribonucleotide nucleotidyltransferase (709 aa).

The Mg(2+) site is built by Asp-485 and Asp-491. The 60-residue stretch at 552–611 (PRIYTMKIDPKKIKDVIGKGGATIRSLTEETGTSIDIDDDGTVKIAAVDSNAAKNVMGRI) folds into the KH domain. Positions 621–689 (GAIYKGKVTR…RQGRIRLTMK (69 aa)) constitute an S1 motif domain.

The protein belongs to the polyribonucleotide nucleotidyltransferase family. Component of the RNA degradosome, which is a multiprotein complex involved in RNA processing and mRNA degradation. Mg(2+) serves as cofactor.

The protein localises to the cytoplasm. It catalyses the reaction RNA(n+1) + phosphate = RNA(n) + a ribonucleoside 5'-diphosphate. In terms of biological role, involved in mRNA degradation. Catalyzes the phosphorolysis of single-stranded polyribonucleotides processively in the 3'- to 5'-direction. The chain is Polyribonucleotide nucleotidyltransferase from Haemophilus influenzae (strain 86-028NP).